A 449-amino-acid chain; its full sequence is Glycosyl hydrolase-like protein 1 (449 aa).

Residues Gln22, His119, 164–165, Tyr292, Glu350, Trp393, and Tyr406 contribute to the a beta-D-glucoside site; that span reads NE. Glu165 (proton donor) is an active-site residue. The active-site Nucleophile is the Glu350.

It belongs to the glycosyl hydrolase 1 family. In terms of tissue distribution, mainly expressed in flowers, flower buds and young leaves, and, to a lesser extent, in old leaves, stems and roots.

It is found in the cytoplasm. It participates in secondary metabolite biosynthesis; terpenoid biosynthesis. Its function is as follows. Component of the oleanane-type triterpene saponins (e.g. saponarioside A and saponarioside B) biosynthetic pathway, leading to the production of natural products with detergent properties used as traditional sources of soap. Beta-glycosidase that catalyzes the transfer of glucose moiety to QA-triFRXX to produce QA-triF(Q)RXX via the elongation of the C-28 sugar chain with a D-quinovose. The chain is Glycosyl hydrolase-like protein 1 from Saponaria officinalis (Common soapwort).